The following is an 89-amino-acid chain: UPF0223 protein BCE_4008 (89 aa).

Belongs to the UPF0223 family.

This chain is UPF0223 protein BCE_4008, found in Bacillus cereus (strain ATCC 10987 / NRS 248).